Reading from the N-terminus, the 241-residue chain is MRKPIAAANWKMNGDFSLLDDFAQANITSDKCETIFALPSVLLDRAQKLGLNALAGQDVSAQVKGAFTGEISASMLKMLGCQYCIIGHSERRQYHHEDEALLIEKWRRLKEAEITPIYCIGELQAEYDAHATQQALERQLRPILEENLVDHKTIIAYEPVWAIGTGKAATPDYAQHVHQMIRQIVAQNYASIAPAMRLLYGGSVKPDNAGLLICQADIDGFLIGGASLDVGLFTKIIETMK.

9–11 contributes to the substrate binding site; sequence NWK. Catalysis depends on His88, which acts as the Electrophile. Glu158 acts as the Proton acceptor in catalysis. Residues Gly164, Ser203, and 224 to 225 contribute to the substrate site; that span reads GG.

The protein belongs to the triosephosphate isomerase family. As to quaternary structure, homodimer.

The protein localises to the cytoplasm. The enzyme catalyses D-glyceraldehyde 3-phosphate = dihydroxyacetone phosphate. It functions in the pathway carbohydrate biosynthesis; gluconeogenesis. It participates in carbohydrate degradation; glycolysis; D-glyceraldehyde 3-phosphate from glycerone phosphate: step 1/1. In terms of biological role, involved in the gluconeogenesis. Catalyzes stereospecifically the conversion of dihydroxyacetone phosphate (DHAP) to D-glyceraldehyde-3-phosphate (G3P). The chain is Triosephosphate isomerase from Dichelobacter nodosus (strain VCS1703A).